The primary structure comprises 542 residues: Propane 2-monooxygenase, hydroxylase component large subunit (542 aa).

Residues Glu-97, Glu-127, His-130, Glu-192, Glu-226, and His-229 each coordinate Fe cation.

Belongs to the TmoA/XamoA family. As to quaternary structure, the propane 2-monooxygenase multicomponent enzyme system is composed of an electron transfer component and a monooxygenase component interacting with the effector protein MimD. The electron transfer component is composed of a reductase (MimB), and the monooxygenase component is formed by a large subunit (MimA) and a small subunit (MimC). Requires the presence of the chaperonin-like protein MimG to ensure a productive folding, resulting of a soluble MimA, which leads to the active form of MimABCD. It depends on Fe(2+) as a cofactor.

It catalyses the reaction propane + NADH + O2 + H(+) = propan-2-ol + NAD(+) + H2O. The catalysed reaction is acetone + NADH + O2 + H(+) = hydroxyacetone + NAD(+) + H2O. It carries out the reaction butan-2-one + NADH + O2 + H(+) = 1-hydroxy-2-butanone + NAD(+) + H2O. The enzyme catalyses phenol + NADH + O2 + H(+) = hydroquinone + NAD(+) + H2O. Functionally, component of the propane 2-monooxygenase multicomponent enzyme system which is involved in the degradation of propane via the O2-dependent hydroxylation of propane. Also involved in the degradation of acetone via the O2-dependent hydroxylation of acetone. Also able to catalyze the oxidation of phenol, methylethylketone (2-butanone), 1-propanol and 2-propanol. The sequence is that of Propane 2-monooxygenase, hydroxylase component large subunit from Mycolicibacterium smegmatis (strain ATCC 700084 / mc(2)155) (Mycobacterium smegmatis).